The following is a 344-amino-acid chain: tRNA N6-adenosine threonylcarbamoyltransferase (344 aa).

2 residues coordinate Fe cation: His118 and His122. Substrate-binding positions include 141–145 (TASGG), Asp174, Gly187, and Asn284. Asp312 contacts Fe cation.

It belongs to the KAE1 / TsaD family. Fe(2+) serves as cofactor.

The protein localises to the cytoplasm. The catalysed reaction is L-threonylcarbamoyladenylate + adenosine(37) in tRNA = N(6)-L-threonylcarbamoyladenosine(37) in tRNA + AMP + H(+). In terms of biological role, required for the formation of a threonylcarbamoyl group on adenosine at position 37 (t(6)A37) in tRNAs that read codons beginning with adenine. Is involved in the transfer of the threonylcarbamoyl moiety of threonylcarbamoyl-AMP (TC-AMP) to the N6 group of A37, together with TsaE and TsaB. TsaD likely plays a direct catalytic role in this reaction. In Desulfotalea psychrophila (strain LSv54 / DSM 12343), this protein is tRNA N6-adenosine threonylcarbamoyltransferase.